We begin with the raw amino-acid sequence, 308 residues long: tRNA-cytidine(32) 2-sulfurtransferase (308 aa).

The PP-loop motif motif lies at Ser-39–Ser-44. 3 residues coordinate [4Fe-4S] cluster: Cys-114, Cys-117, and Cys-205.

Belongs to the TtcA family. Homodimer. Requires Mg(2+) as cofactor. The cofactor is [4Fe-4S] cluster.

The protein resides in the cytoplasm. It catalyses the reaction cytidine(32) in tRNA + S-sulfanyl-L-cysteinyl-[cysteine desulfurase] + AH2 + ATP = 2-thiocytidine(32) in tRNA + L-cysteinyl-[cysteine desulfurase] + A + AMP + diphosphate + H(+). The protein operates within tRNA modification. In terms of biological role, catalyzes the ATP-dependent 2-thiolation of cytidine in position 32 of tRNA, to form 2-thiocytidine (s(2)C32). The sulfur atoms are provided by the cysteine/cysteine desulfurase (IscS) system. This chain is tRNA-cytidine(32) 2-sulfurtransferase, found in Cupriavidus taiwanensis (strain DSM 17343 / BCRC 17206 / CCUG 44338 / CIP 107171 / LMG 19424 / R1) (Ralstonia taiwanensis (strain LMG 19424)).